A 90-amino-acid polypeptide reads, in one-letter code: Progonadoliberin-3 (90 aa).

The first 23 residues, M1–S23, serve as a signal peptide directing secretion. Q24 carries the pyrrolidone carboxylic acid modification. G33 is subject to Glycine amide. The disordered stretch occupies residues L56 to K90.

The protein belongs to the GnRH family.

The protein localises to the secreted. Stimulates the secretion of gonadotropins. In Dicentrarchus labrax (European seabass), this protein is Progonadoliberin-3 (gnrh3).